We begin with the raw amino-acid sequence, 146 residues long: Anti-sigma F factor (146 aa).

It belongs to the anti-sigma-factor family.

It carries out the reaction L-seryl-[protein] + ATP = O-phospho-L-seryl-[protein] + ADP + H(+). The catalysed reaction is L-threonyl-[protein] + ATP = O-phospho-L-threonyl-[protein] + ADP + H(+). In terms of biological role, binds to sigma F and blocks its ability to form an RNA polymerase holoenzyme (E-sigma F). Phosphorylates SpoIIAA on a serine residue. This phosphorylation may enable SpoIIAA to act as an anti-anti-sigma factor that counteracts SpoIIAB and thus releases sigma F from inhibition. In Bacillus licheniformis (strain ATCC 14580 / DSM 13 / JCM 2505 / CCUG 7422 / NBRC 12200 / NCIMB 9375 / NCTC 10341 / NRRL NRS-1264 / Gibson 46), this protein is Anti-sigma F factor.